A 148-amino-acid polypeptide reads, in one-letter code: Macrodomain Ter protein (148 aa).

The protein belongs to the MatP family. As to quaternary structure, homodimer.

The protein resides in the cytoplasm. Required for spatial organization of the terminus region of the chromosome (Ter macrodomain) during the cell cycle. Prevents early segregation of duplicated Ter macrodomains during cell division. Binds specifically to matS, which is a 13 bp signature motif repeated within the Ter macrodomain. This is Macrodomain Ter protein from Haemophilus influenzae (strain ATCC 51907 / DSM 11121 / KW20 / Rd).